The following is a 228-amino-acid chain: Phosphoglycolate phosphatase (228 aa).

Aspartate 12 acts as the Nucleophile in catalysis. Positions 12, 14, and 177 each coordinate Mg(2+).

It belongs to the HAD-like hydrolase superfamily. CbbY/CbbZ/Gph/YieH family. Requires Mg(2+) as cofactor.

The enzyme catalyses 2-phosphoglycolate + H2O = glycolate + phosphate. The protein operates within organic acid metabolism; glycolate biosynthesis; glycolate from 2-phosphoglycolate: step 1/1. In terms of biological role, specifically catalyzes the dephosphorylation of 2-phosphoglycolate. Is involved in the dissimilation of the intracellular 2-phosphoglycolate formed during the DNA repair of 3'-phosphoglycolate ends, a major class of DNA lesions induced by oxidative stress. The chain is Phosphoglycolate phosphatase from Vibrio vulnificus (strain CMCP6).